The following is a 338-amino-acid chain: DNA-directed RNA polymerase subunit alpha (338 aa).

Positions 1–234 are alpha N-terminal domain (alpha-NTD); the sequence is MIERNWNELI…DQLQIFITFE (234 aa). The interval 250 to 338 is alpha C-terminal domain (alpha-CTD); sequence FNPALLKKVD…DLAKKFEDQI (89 aa).

Belongs to the RNA polymerase alpha chain family. In terms of assembly, homodimer. The RNAP catalytic core consists of 2 alpha, 1 beta, 1 beta' and 1 omega subunit. When a sigma factor is associated with the core the holoenzyme is formed, which can initiate transcription.

The catalysed reaction is RNA(n) + a ribonucleoside 5'-triphosphate = RNA(n+1) + diphosphate. In terms of biological role, DNA-dependent RNA polymerase catalyzes the transcription of DNA into RNA using the four ribonucleoside triphosphates as substrates. The polypeptide is DNA-directed RNA polymerase subunit alpha (Caulobacter sp. (strain K31)).